The following is a 160-amino-acid chain: Protein MGF 300-2R (160 aa).

The protein belongs to the asfivirus MGF 300 family.

In terms of biological role, plays a role in virus cell tropism, and may be required for efficient virus replication in macrophages. This African swine fever virus (isolate Tick/South Africa/Pretoriuskop Pr4/1996) (ASFV) protein is Protein MGF 300-2R.